Here is a 386-residue protein sequence, read N- to C-terminus: 2-isopropylmalate synthase (386 aa).

The Pyruvate carboxyltransferase domain occupies 12 to 265 (VRIFDTTLRD…DVGVRTYLLY (254 aa)). A divalent metal cation-binding residues include aspartate 21, histidine 203, histidine 205, and asparagine 239.

This sequence belongs to the alpha-IPM synthase/homocitrate synthase family. As to quaternary structure, homodimer. Requires a divalent metal cation as cofactor.

The enzyme catalyses 3-methyl-2-oxobutanoate + acetyl-CoA + H2O = (2S)-2-isopropylmalate + CoA + H(+). The protein operates within amino-acid biosynthesis; L-leucine biosynthesis; L-leucine from 3-methyl-2-oxobutanoate: step 1/4. Is not inhibited by leucine. Catalyzes the condensation of the acetyl group of acetyl-CoA with 3-methyl-2-oxobutanoate (2-oxoisovalerate) to form 3-carboxy-3-hydroxy-4-methylpentanoate (2-isopropylmalate). Carries out the first step of the leucine biosynthesis pathway. Also displays a low citramalate synthase activity, using pyruvate as substrate, but is unable to use 2-oxoglutarate. The protein is 2-isopropylmalate synthase of Sulfolobus acidocaldarius (strain ATCC 33909 / DSM 639 / JCM 8929 / NBRC 15157 / NCIMB 11770).